Consider the following 196-residue polypeptide: Baseplate wedge protein gp53 (196 aa).

Part of the baseplate macromolecular complex which consists of gp5, gp5.4, gp27 (central spike complex); gp6, gp25, gp53 (inner baseplate); gp7, gp8 (intermediate baseplate); gp9, gp10, gp11, gp12 (peripheral); gp48 and gp54 (proximal region of the tail tube). Interacts with gp25 and with the (gp6)2-gp7 heterotrimeric molecule.

It localises to the virion. Baseplate protein that is located next to the tail tube (inner baseplate). Involved in the tail assembly. Involved in the tail assembly. This Enterobacteria phage T4 (Bacteriophage T4) protein is Baseplate wedge protein gp53 (53).